A 239-amino-acid polypeptide reads, in one-letter code: Probable transcriptional regulatory protein BPUM_0743 (239 aa).

It belongs to the TACO1 family. YeeN subfamily.

It is found in the cytoplasm. In Bacillus pumilus (strain SAFR-032), this protein is Probable transcriptional regulatory protein BPUM_0743.